Here is a 400-residue protein sequence, read N- to C-terminus: Acetate kinase (400 aa).

Mg(2+) is bound at residue N8. ATP is bound at residue K15. R89 contacts substrate. The Proton donor/acceptor role is filled by D146. Residues 206–210 (HVGNG), 283–285 (DMR), and 331–335 (GMGEN) each bind ATP. E383 contributes to the Mg(2+) binding site.

Belongs to the acetokinase family. As to quaternary structure, homodimer. Requires Mg(2+) as cofactor. Mn(2+) is required as a cofactor.

It is found in the cytoplasm. The catalysed reaction is acetate + ATP = acetyl phosphate + ADP. It participates in metabolic intermediate biosynthesis; acetyl-CoA biosynthesis; acetyl-CoA from acetate: step 1/2. Catalyzes the formation of acetyl phosphate from acetate and ATP. Can also catalyze the reverse reaction. In Streptococcus equi subsp. zooepidemicus (strain MGCS10565), this protein is Acetate kinase.